Here is a 446-residue protein sequence, read N- to C-terminus: Cytochrome P450 monooxygenase ptmP (446 aa).

A helical transmembrane segment spans residues 19-39 (VTVIWILMALVLLAYLILPNP). Cysteine 385 is a heme binding site. Asparagine 430 is a glycosylation site (N-linked (GlcNAc...) asparagine).

Belongs to the cytochrome P450 family. It depends on heme as a cofactor.

The protein localises to the membrane. The protein operates within secondary metabolite biosynthesis. Functionally, cytochrome P450 monooxygenase; part of the gene cluster that mediates the biosynthesis of the indole diterpenes penitrems. The geranylgeranyl diphosphate (GGPP) synthase ptmG catalyzes the first step in penitrem biosynthesis via conversion of farnesyl pyrophosphate and isopentyl pyrophosphate into geranylgeranyl pyrophosphate (GGPP). Condensation of indole-3-glycerol phosphate with GGPP by the prenyl transferase ptmC then forms 3-geranylgeranylindole (3-GGI). Epoxidation by the FAD-dependent monooxygenase ptmM leads to a epoxidized-GGI that is substrate of the terpene cyclase ptmB for cyclization to yield paspaline. Paspaline is subsequently converted to 13-desoxypaxilline by the cytochrome P450 monooxygenase ptmP, the latter being then converted to paxilline by the cytochrome P450 monooxygenase ptmQ. Paxilline is converted to beta-paxitriol via C-10 ketoreduction by the short-chain dehydrogenase ptmH which can be monoprenylated at the C-20 by the indole diterpene prenyltransferase ptmD. A two-step elimination (acetylation and elimination) process performed by the O-acetyltransferase ptmV and ptmI leads to the production of the prenylated form of penijanthine. The FAD-linked oxidoreductase ptmO then converts the prenylated form of penijanthine into PC-M5 which is in turn transformed into PC-M4 by the aromatic dimethylallyltransferase ptmE. Five sequential oxidative transformations performed by the cytochrome P450 monooxygenases ptmK, ptmU, ptmL, ptmN and ptmJ yield the various penitrem compounds. PtmK, ptmU and ptmM are involved in the formation of the key bicyclic ring of penitrem C via the formation of the intermediates secopenitrem D and penitrem D. PtmL catalyzes the epoxidation of penitrem D and C to yield penitrem B and F, respectively. PtmJ catalyzes the last benzylic hydroxylation to convert penitrem B to prenitrem E and penitrem F to penitrem A. The sequence is that of Cytochrome P450 monooxygenase ptmP from Penicillium ochrochloron.